The following is a 247-amino-acid chain: Small ribosomal subunit protein uS2 (247 aa).

The protein belongs to the universal ribosomal protein uS2 family.

The protein is Small ribosomal subunit protein uS2 of Pseudomonas savastanoi pv. phaseolicola (strain 1448A / Race 6) (Pseudomonas syringae pv. phaseolicola (strain 1448A / Race 6)).